The chain runs to 401 residues: Exodeoxyribonuclease 7 large subunit (401 aa).

This sequence belongs to the XseA family. Heterooligomer composed of large and small subunits.

Its subcellular location is the cytoplasm. The enzyme catalyses Exonucleolytic cleavage in either 5'- to 3'- or 3'- to 5'-direction to yield nucleoside 5'-phosphates.. In terms of biological role, bidirectionally degrades single-stranded DNA into large acid-insoluble oligonucleotides, which are then degraded further into small acid-soluble oligonucleotides. This Thermoanaerobacter pseudethanolicus (strain ATCC 33223 / 39E) (Clostridium thermohydrosulfuricum) protein is Exodeoxyribonuclease 7 large subunit.